We begin with the raw amino-acid sequence, 309 residues long: Taste receptor type 2 member 45 (309 aa).

Residue Met1 is a topological domain, extracellular. Residues 2–22 traverse the membrane as a helical segment; that stretch reads ITFLPIIFSILVVVTFVIGNF. The Cytoplasmic portion of the chain corresponds to 23-55; it reads ANGFIALVNSTEWVKRQKISFADQIVTALAVSR. Residues 56–76 traverse the membrane as a helical segment; sequence VGLLWVLLLNWYSTVLNPAFY. At 77–98 the chain is on the extracellular side; the sequence is SVELRTTAYNIWAVTGHFSNWL. A helical membrane pass occupies residues 99–119; it reads ATSLSIFYLLKIANFSNLIFL. Residues 120–126 lie on the Cytoplasmic side of the membrane; sequence HLKRRVK. Residues 127 to 147 traverse the membrane as a helical segment; it reads SVILVMLLGPLLFLACHLFVV. The Extracellular segment spans residues 148 to 178; the sequence is NMNQIVWTKEYEGNMTWKIKLRRAMYLSDTT. The N-linked (GlcNAc...) asparagine glycan is linked to Asn161. The helical transmembrane segment at 179–199 threads the bilayer; sequence VTMLANLVPFTVTLISFLLLV. Residues 200–229 are Cytoplasmic-facing; that stretch reads CSLCEHLKKMQLHGKGSQDPSTKVHIKALQ. The chain crosses the membrane as a helical span at residues 230–250; it reads TVISFLLLCAIYFVSVIISVW. Topologically, residues 251-259 are extracellular; the sequence is SFKNLENKP. The helical transmembrane segment at 260 to 280 threads the bilayer; it reads VFMFCQAIGFSCSSAHPFILI. Residues 281–309 are Cytoplasmic-facing; that stretch reads WGNKKLKQPFLSVLWQMRYWVKGEKPSSS.

Belongs to the G-protein coupled receptor T2R family.

Its subcellular location is the membrane. Its function is as follows. Receptor that may play a role in the perception of bitterness and is gustducin-linked. May play a role in sensing the chemical composition of the gastrointestinal content. The activity of this receptor may stimulate alpha gustducin, mediate PLC-beta-2 activation and lead to the gating of TRPM5. This is Taste receptor type 2 member 45 (TAS2R45) from Pan paniscus (Pygmy chimpanzee).